Reading from the N-terminus, the 413-residue chain is uncharacterized protein (413 aa).

2 disordered regions span residues 108-158 (ESVP…SKIS) and 232-257 (DRLG…RLGA). Position 115 is a phosphoserine (Ser-115). Over residues 127 to 139 (SAASRMIANSLNH) the composition is skewed to polar residues. Ser-141 carries the phosphoserine modification. A Glycyl lysine isopeptide (Lys-Gly) (interchain with G-Cter in SUMO2) cross-link involves residue Lys-239. 2 positions are modified to phosphoserine: Ser-269 and Ser-296. The disordered stretch occupies residues 290-336 (RGPTKASAQPALTVKAKAASSATSTATTPKLRRLALPSRPGLQKKPD). The segment covering 302-318 (TVKAKAASSATSTATTP) has biased composition (low complexity). Position 342 is a phosphoserine (Ser-342).

This is an uncharacterized protein from Mus musculus (Mouse).